The primary structure comprises 294 residues: Putative maltodextrin utilization protein YvdJ (294 aa).

The next 4 helical transmembrane spans lie at 35–55 (LSFL…VSFV), 184–204 (MIMM…TFVL), 228–248 (IAIC…MVHF), and 249–269 (DLIT…SFAF).

The protein resides in the cell membrane. In terms of biological role, could have a role in maltodextrin utilization. This Bacillus subtilis (strain 168) protein is Putative maltodextrin utilization protein YvdJ (yvdJ).